The chain runs to 84 residues: Acyl carrier protein (84 aa).

In terms of domain architecture, Carrier spans serine 4–valine 80. Serine 40 is subject to O-(pantetheine 4'-phosphoryl)serine.

Belongs to the acyl carrier protein (ACP) family. 4'-phosphopantetheine is transferred from CoA to a specific serine of apo-ACP by AcpS. This modification is essential for activity because fatty acids are bound in thioester linkage to the sulfhydryl of the prosthetic group.

It is found in the cytoplasm. Its pathway is lipid metabolism; fatty acid biosynthesis. Its function is as follows. Carrier of the growing fatty acid chain in fatty acid biosynthesis. This Nostoc sp. (strain PCC 7120 / SAG 25.82 / UTEX 2576) protein is Acyl carrier protein.